The primary structure comprises 310 residues: Protoheme IX farnesyltransferase 2 (310 aa).

9 consecutive transmembrane segments (helical) span residues 25 to 45, 49 to 69, 98 to 118, 121 to 141, 145 to 165, 176 to 196, 222 to 242, 245 to 265, and 277 to 297; these read PGII…AAKG, LVLM…GCAI, HVLL…ALFT, LALL…SLYM, SVYG…VGYC, VILL…IAIF, IVLY…AGYT, AFMA…LKGY, and QVFG…ALDF.

It belongs to the UbiA prenyltransferase family. Protoheme IX farnesyltransferase subfamily.

It localises to the cell inner membrane. The catalysed reaction is heme b + (2E,6E)-farnesyl diphosphate + H2O = Fe(II)-heme o + diphosphate. It functions in the pathway porphyrin-containing compound metabolism; heme O biosynthesis; heme O from protoheme: step 1/1. Functionally, converts heme B (protoheme IX) to heme O by substitution of the vinyl group on carbon 2 of heme B porphyrin ring with a hydroxyethyl farnesyl side group. This chain is Protoheme IX farnesyltransferase 2, found in Shewanella sp. (strain ANA-3).